Consider the following 770-residue polypeptide: Jhy protein (770 aa).

Disordered regions lie at residues 1–249 (MNKY…SKQY), 295–438 (TVQN…SFVS), 493–527 (HRHESPSQRAPQSDHHMNTHRSTKTKKPAKQPQAE), 595–647 (ESQL…KRDV), and 708–740 (DYAKTIPKPKPPNLPDQTAKKTKNSRHSEKEGG). The span at 57–71 (SWSDIKDQIQDKDME) shows a compositional bias: basic and acidic residues. A compositionally biased stretch (acidic residues) spans 72–85 (PDSLEEDSPSETEE). Residues 112 to 134 (HQVEDKYSDLRYDPNWKNKREEG) are compositionally biased toward basic and acidic residues. The span at 218–229 (SGLSQYLKSSSS) shows a compositional bias: low complexity. Residues 295–314 (TVQNDKEVENTFMDPEDKWH) show a composition bias toward basic and acidic residues. The segment covering 340–354 (RGQSSDAANGQQPSR) has biased composition (polar residues). Residues 355–370 (RTAKARVRKQRKHQKG) are compositionally biased toward basic residues. The segment covering 383-398 (QNNQNNPFQQPQNQRQ) has biased composition (low complexity). A compositionally biased stretch (polar residues) spans 410 to 438 (AQTNASNPNLQDARTLTHNPKVTSDSFVS). Basic and acidic residues predominate over residues 493 to 509 (HRHESPSQRAPQSDHHM). 2 stretches are compositionally biased toward basic residues: residues 510–521 (NTHRSTKTKKPA) and 625–642 (GKRHRKRSSTKSSKLKGY).

Expressed in the brain, specifically in hypothalamus, pineal gland, and ependymal cells of the aqueduct of Sylvius, as well as in the choroid plexus of the third ventricle. Expressed in the ependymal cells lining the lateral ventricles (at protein level).

In terms of biological role, required for the normal development of cilia in brain ependymal cells lining the ventricular surfaces. The polypeptide is Jhy protein (Mus musculus (Mouse)).